A 187-amino-acid chain; its full sequence is Calcium and integrin-binding family member 2 (187 aa).

EF-hand domains follow at residues arginine 66–serine 101, proline 103–serine 138, and glutamate 144–phenylalanine 179. Residues aspartate 116, asparagine 118, aspartate 120, aspartate 127, aspartate 157, aspartate 159, aspartate 161, lysine 163, and aspartate 168 each contribute to the Ca(2+) site.

Monomer. Homodimer. Interacts with WHRN and MYO7A. Interacts with ITGA2B (via C-terminus cytoplasmic tail region); the interactions are stabilized/increased in a calcium and magnesium-dependent manner. Interacts with ITGA7 (via C-terminus cytoplasmic tail region); the interactions are stabilized/increased in a calcium and magnesium-dependent manner. Interacts with TMC1. Interacts with TMC2.

The protein localises to the cytoplasm. It is found in the cell projection. It localises to the stereocilium. The protein resides in the photoreceptor inner segment. Its subcellular location is the cilium. The protein localises to the photoreceptor outer segment. It is found in the cell membrane. It localises to the sarcolemma. Functionally, calcium- and integrin-binding protein that plays a role in intracellular calcium homeostasis. Acts as an auxiliary subunit of the sensory mechanoelectrical transduction (MET) channel in hair cells. Essential for mechanoelectrical transduction (MET) currents in auditory hair cells and thereby required for hearing. Regulates the function of hair cell mechanotransduction by controlling the distribution of transmembrane channel-like proteins TMC1 and TMC2, and by regulating the function of the MET channels in hair cells. Required for the maintenance of auditory hair cell stereocilia bundle morphology and function and for hair-cell survival in the cochlea. Critical for proper photoreceptor cell maintenance and function. Plays a role in intracellular calcium homeostasis by decreasing ATP-induced calcium release. This Rattus norvegicus (Rat) protein is Calcium and integrin-binding family member 2 (Cib2).